Consider the following 273-residue polypeptide: NAD-dependent protein deacetylase 2 (273 aa).

One can recognise a Deacetylase sirtuin-type domain in the interval 1–273; that stretch reads MSNAPLANQS…RCEAALAFLL (273 aa). NAD(+) contacts are provided by residues 26–46 and 104–107; these read GAGCSTNSGIPDYRDSHGNWK and QNVD. The Proton acceptor role is filled by His-122. 4 residues coordinate Zn(2+): Cys-130, Cys-133, Cys-181, and Cys-184. NAD(+) contacts are provided by residues 221–223, 247–249, and Cys-265; these read GSS and NLG.

The protein belongs to the sirtuin family. Class II subfamily. Requires Zn(2+) as cofactor.

The protein resides in the cytoplasm. It catalyses the reaction N(6)-acetyl-L-lysyl-[protein] + NAD(+) + H2O = 2''-O-acetyl-ADP-D-ribose + nicotinamide + L-lysyl-[protein]. Functionally, NAD-dependent protein deacetylase which modulates the activities of several enzymes which are inactive in their acetylated form. The protein is NAD-dependent protein deacetylase 2 of Bradyrhizobium diazoefficiens (strain JCM 10833 / BCRC 13528 / IAM 13628 / NBRC 14792 / USDA 110).